Reading from the N-terminus, the 387-residue chain is Tetratricopeptide repeat protein 4 (387 aa).

M1 carries the N-acetylmethionine modification. A phosphoserine mark is found at S47 and S51. TPR repeat units follow at residues 79 to 112 (AKTY…KCAD), 117 to 150 (AVLY…KPCH), and 151 to 184 (LKAI…DAKE). At S243 the chain carries Phosphoserine.

It belongs to the TTC4 family. In terms of assembly, interacts (via TPR repeats) with HSP90AB1. Interacts with HSPA8 and CDC6. Interacts with TBK1. Interacts with MSL1. Highly expressed in proliferating tissue and tumor cell lines but not in normal cell lines.

The protein localises to the nucleus. The protein resides in the nucleoplasm. It is found in the cytoplasm. May act as a co-chaperone for HSP90AB1. Promotes Sendai virus (SeV)-induced host cell innate immune responses. The protein is Tetratricopeptide repeat protein 4 (TTC4) of Homo sapiens (Human).